The following is a 382-amino-acid chain: D-galactonate dehydratase (382 aa).

Asp183 provides a ligand contact to Mg(2+). Residue His185 is the Proton donor of the active site. The Mg(2+) site is built by Glu209 and Glu235. His285 functions as the Proton acceptor in the catalytic mechanism.

This sequence belongs to the mandelate racemase/muconate lactonizing enzyme family. GalD subfamily. Mg(2+) serves as cofactor.

It catalyses the reaction D-galactonate = 2-dehydro-3-deoxy-D-galactonate + H2O. Its pathway is carbohydrate acid metabolism; D-galactonate degradation; D-glyceraldehyde 3-phosphate and pyruvate from D-galactonate: step 1/3. In terms of biological role, catalyzes the dehydration of D-galactonate to 2-keto-3-deoxy-D-galactonate. This is D-galactonate dehydratase from Xanthomonas campestris pv. campestris (strain 8004).